A 373-amino-acid chain; its full sequence is Leucine aminopeptidase 1 (373 aa).

A signal peptide spans 1-18; the sequence is MKLLSVLALSATASSVLG. Residues 19 to 75 constitute a propeptide that is removed on maturation; it reads ASIPVDTRAEKFLIELAPGETRWVTEEEKWALKESGQDFFDITDEEVGFTAAVAQPA. 2 residues coordinate Zn(2+): His176 and Asp195. Residue Asn196 is glycosylated (N-linked (GlcNAc...) asparagine). Zn(2+) contacts are provided by Glu234 and Asp261. N-linked (GlcNAc...) asparagine glycosylation occurs at Asn288. A disulfide bond links Cys310 and Cys314. Residue His343 coordinates Zn(2+). The N-linked (GlcNAc...) asparagine glycan is linked to Asn348.

It belongs to the peptidase M28 family. M28E subfamily. In terms of assembly, monomer. The cofactor is Zn(2+).

It is found in the secreted. In terms of biological role, extracellular aminopeptidase that allows assimilation of proteinaceous substrates. The chain is Leucine aminopeptidase 1 (LAP1) from Arthroderma gypseum (strain ATCC MYA-4604 / CBS 118893) (Microsporum gypseum).